Consider the following 74-residue polypeptide: UPF0352 protein PM1884 (74 aa).

It belongs to the UPF0352 family.

This chain is UPF0352 protein PM1884, found in Pasteurella multocida (strain Pm70).